Consider the following 390-residue polypeptide: tRNA-specific 2-thiouridylase MnmA (390 aa).

Residues 20-27 and Leu46 contribute to the ATP site; that span reads AMSGGVDS. Residue Cys114 is the Nucleophile of the active site. Cys114 and Cys211 form a disulfide bridge. Residue Gly138 participates in ATP binding. Positions 161-163 are interaction with tRNA; the sequence is RDQ. The Cysteine persulfide intermediate role is filled by Cys211.

This sequence belongs to the MnmA/TRMU family.

Its subcellular location is the cytoplasm. It catalyses the reaction S-sulfanyl-L-cysteinyl-[protein] + uridine(34) in tRNA + AH2 + ATP = 2-thiouridine(34) in tRNA + L-cysteinyl-[protein] + A + AMP + diphosphate + H(+). In terms of biological role, catalyzes the 2-thiolation of uridine at the wobble position (U34) of tRNA, leading to the formation of s(2)U34. This Azorhizobium caulinodans (strain ATCC 43989 / DSM 5975 / JCM 20966 / LMG 6465 / NBRC 14845 / NCIMB 13405 / ORS 571) protein is tRNA-specific 2-thiouridylase MnmA.